A 166-amino-acid polypeptide reads, in one-letter code: NADPH-dependent 7-cyano-7-deazaguanine reductase (166 aa).

Cys-57 (thioimide intermediate) is an active-site residue. Asp-64 functions as the Proton donor in the catalytic mechanism. Substrate contacts are provided by residues 79–81 (VES) and 98–99 (HE).

This sequence belongs to the GTP cyclohydrolase I family. QueF type 1 subfamily.

It localises to the cytoplasm. The enzyme catalyses 7-aminomethyl-7-carbaguanine + 2 NADP(+) = 7-cyano-7-deazaguanine + 2 NADPH + 3 H(+). The protein operates within tRNA modification; tRNA-queuosine biosynthesis. Catalyzes the NADPH-dependent reduction of 7-cyano-7-deazaguanine (preQ0) to 7-aminomethyl-7-deazaguanine (preQ1). The polypeptide is NADPH-dependent 7-cyano-7-deazaguanine reductase (Staphylococcus haemolyticus (strain JCSC1435)).